The following is a 202-amino-acid chain: Holliday junction resolvase RecU (202 aa).

Mg(2+) is bound by residues threonine 85, aspartate 87, glutamate 100, and glutamine 119.

It belongs to the RecU family. It depends on Mg(2+) as a cofactor.

It localises to the cytoplasm. It carries out the reaction Endonucleolytic cleavage at a junction such as a reciprocal single-stranded crossover between two homologous DNA duplexes (Holliday junction).. Its function is as follows. Endonuclease that resolves Holliday junction intermediates in genetic recombination. Cleaves mobile four-strand junctions by introducing symmetrical nicks in paired strands. Promotes annealing of linear ssDNA with homologous dsDNA. Required for DNA repair, homologous recombination and chromosome segregation. In Streptococcus equi subsp. zooepidemicus (strain H70), this protein is Holliday junction resolvase RecU.